The primary structure comprises 137 residues: Large ribosomal subunit protein uL16 (137 aa).

It belongs to the universal ribosomal protein uL16 family. In terms of assembly, part of the 50S ribosomal subunit.

Functionally, binds 23S rRNA and is also seen to make contacts with the A and possibly P site tRNAs. In Leuconostoc citreum (strain KM20), this protein is Large ribosomal subunit protein uL16.